The sequence spans 529 residues: Probable serine carboxypeptidase ARB_06414 (529 aa).

An N-terminal signal peptide occupies residues 1–19; that stretch reads MRGLSYFVLALSAIDAAAA. The tract at residues 171-191 is disordered; that stretch reads PTDDNPSRPVGTGFSQGKPSV. S225 is a catalytic residue. N-linked (GlcNAc...) asparagine glycans are attached at residues N284 and N377. D434 is an active-site residue. Residues N440 and N448 are each glycosylated (N-linked (GlcNAc...) asparagine). H503 is an active-site residue.

Belongs to the peptidase S10 family.

It is found in the secreted. In terms of biological role, removes acidic, neutral and basic amino acids as well as proline from the C-terminal position. This is Probable serine carboxypeptidase ARB_06414 from Arthroderma benhamiae (strain ATCC MYA-4681 / CBS 112371) (Trichophyton mentagrophytes).